The chain runs to 179 residues: CASP-like protein 5A2 (179 aa).

The segment at 1–24 (MNVSHASVHPVEDPPAAATEVENP) is disordered. Over 1 to 38 (MNVSHASVHPVEDPPAAATEVENPPRVRMDDMEGMPGT) the chain is Cytoplasmic. Residues 39 to 59 (LLGLALRFFQFLFAAAALCVM) form a helical membrane-spanning segment. The Extracellular portion of the chain corresponds to 60–70 (ASTSDFPSVTA). A helical membrane pass occupies residues 71-91 (FCYLVAATGLQSLWSLALAMV). At 92 to 115 (DVYAIMVKRSLQNRRLVSLFAIGD) the chain is on the cytoplasmic side. Residues 116–136 (GVTSTLTFAAACASAGITVLI) traverse the membrane as a helical segment. The Extracellular portion of the chain corresponds to 137–155 (DNDLNSCAQNHCVQFETST). Residues 156-176 (ALAFISWFAALPSFLFNFWSL) traverse the membrane as a helical segment. Residues 177–179 (ASR) are Cytoplasmic-facing.

The protein belongs to the Casparian strip membrane proteins (CASP) family. Homodimer and heterodimers.

It localises to the cell membrane. This is CASP-like protein 5A2 from Arabidopsis thaliana (Mouse-ear cress).